A 391-amino-acid polypeptide reads, in one-letter code: Na(+)/H(+) antiporter NhaA (391 aa).

Transmembrane regions (helical) follow at residues 14 to 34, 59 to 79, 95 to 115, 124 to 144, 154 to 174, 177 to 197, 213 to 233, 261 to 281, 292 to 312, 331 to 351, and 363 to 383; these read AGGI…NSPL, LIHW…GLEV, SLPT…YLIF, VGWA…MALL, VFLL…IAMF, TDLS…LVGL, LILW…GVII, FVIL…GMSL, IALG…FVAV, VAVM…LAFI, and LGIL…LSKV.

It belongs to the NhaA Na(+)/H(+) (TC 2.A.33) antiporter family.

The protein resides in the cell inner membrane. The enzyme catalyses Na(+)(in) + 2 H(+)(out) = Na(+)(out) + 2 H(+)(in). In terms of biological role, na(+)/H(+) antiporter that extrudes sodium in exchange for external protons. The sequence is that of Na(+)/H(+) antiporter NhaA from Shewanella loihica (strain ATCC BAA-1088 / PV-4).